Consider the following 717-residue polypeptide: MTSKGMCPVAHGANTEASETPMAWWPKALNLDILHQQDTKTNPMGSSFSYRDELKKLDVGALKKDMKDLLTNSQDWWPADWGHYGGLMIRMAWHSAGSYRIADGRGGAGTGNQRFAPINSWPDNANLDKARRLLWPIKKKYGNKISWADLMILAGTIAYESMGLKTFGFSFGREDIWHPEKDIYWGSEKEWLQKSGGKGSRYSGERELSNPLAAVMMGLIYVNPEGVDGKPDPLKTAQDMRVTFARMAMNDEETVALTAGGHTVGKAHGNGNAANLGPAPEAAPIDEQGLGWMNHKTRGIGRDAVTSGLEGAWTTHPTQWDNGYFNLLLNYDWKLTESPAGAHQYEPINIKEEDKPVDVEDASIRCMPMMTDADIALKMDPEYRKISERFSKDQAYFSETFAKAWFKLTHRDMGPKARYFGPDVPKEELIWQDPIPSGPKSYDIDAVKAKIKASGLSMSDMVTTAWDSARTFRGSDKRGGANGARIRLAPQKDWMGNEPERLARVLAVYEKIGKECGISIADTIILGGNIGIEQAAKAGGFDVKVPFTSGRGDAIQAMTDVESFEVLEPLADGFRNWLKESYVVTPEELLLDRTQLMGLTAQEMTVLIGGMRVLGTNYGGSKQGVFTEKEGVLSNDFFVNLTDMNYLWKPTGQNSYDIVERNTEKTKWTATRADLVFGSNSILRAYAEVYAQDDNKEKFVNDFIAAWTKVMNADLFN.

The N-terminal stretch at 1 to 12 (MTSKGMCPVAHG) is a signal peptide. The segment at residues 93 to 221 (WHSAGSYRIA…LAAVMMGLIY (129 aa)) is a cross-link (tryptophyl-tyrosyl-methioninium (Trp-Tyr) (with M-247)). Residue His-94 is the Proton acceptor of the active site. The segment at residues 221–247 (YVNPEGVDGKPDPLKTAQDMRVTFARM) is a cross-link (tryptophyl-tyrosyl-methioninium (Tyr-Met) (with W-93)). His-262 contacts heme b.

Belongs to the peroxidase family. Peroxidase/catalase subfamily. Homodimer or homotetramer. Requires heme b as cofactor. Formation of the three residue Trp-Tyr-Met cross-link is important for the catalase, but not the peroxidase activity of the enzyme.

The catalysed reaction is H2O2 + AH2 = A + 2 H2O. It catalyses the reaction 2 H2O2 = O2 + 2 H2O. Bifunctional enzyme with both catalase and broad-spectrum peroxidase activity. The protein is Catalase-peroxidase of Polynucleobacter asymbioticus (strain DSM 18221 / CIP 109841 / QLW-P1DMWA-1) (Polynucleobacter necessarius subsp. asymbioticus).